Here is a 146-residue protein sequence, read N- to C-terminus: [Ribosomal protein bS18]-alanine N-acetyltransferase (146 aa).

An N-acetyltransferase domain is found at 2–146 (SIISQIEACD…ENAVVMACYL (145 aa)). 69–71 (IAI) contacts acetyl-CoA. Glutamate 103 acts as the Proton acceptor in catalysis. Asparagine 108 is a binding site for acetyl-CoA. The active-site Proton donor is tyrosine 114.

Belongs to the acetyltransferase family. RimI subfamily.

The protein localises to the cytoplasm. It catalyses the reaction N-terminal L-alanyl-[ribosomal protein bS18] + acetyl-CoA = N-terminal N(alpha)-acetyl-L-alanyl-[ribosomal protein bS18] + CoA + H(+). In terms of biological role, acetylates the N-terminal alanine of ribosomal protein bS18. The protein is [Ribosomal protein bS18]-alanine N-acetyltransferase of Haemophilus influenzae (strain ATCC 51907 / DSM 11121 / KW20 / Rd).